The following is a 379-amino-acid chain: Methionine aminopeptidase 1 (379 aa).

A C6H2-type zinc finger spans residues 7-60; it reads KHICCGIDCNNEADRLQCPKCLNDGVKSYFCGQECFRNSWNIHKHLHRPPNVEK. Zn(2+) is bound by residues C10, C15, C24, C27, C37, C41, H49, and H53. Residue H192 participates in a protein binding. Zn(2+) is bound by residues D209, D220, and H289. An a protein-binding site is contributed by H296. The Zn(2+) site is built by E322 and E353. The residue at position 373 (S373) is a Phosphoserine.

The protein belongs to the peptidase M24A family. Methionine aminopeptidase type 1 subfamily. In terms of assembly, associates with the 60S ribosomal subunit of the 80S translational complex. The cofactor is Zn(2+). Requires Co(2+) as cofactor. It depends on Mn(2+) as a cofactor. Fe(2+) serves as cofactor.

The protein localises to the cytoplasm. The protein resides in the nucleus. It is found in the nucleolus. The enzyme catalyses Release of N-terminal amino acids, preferentially methionine, from peptides and arylamides.. Functionally, cotranslationally removes the N-terminal methionine from nascent proteins. The N-terminal methionine is often cleaved when the second residue in the primary sequence is small and uncharged (Met-Ala-, Cys, Gly, Pro, Ser, Thr, or Val). This chain is Methionine aminopeptidase 1 (fma1), found in Schizosaccharomyces pombe (strain 972 / ATCC 24843) (Fission yeast).